Reading from the N-terminus, the 466-residue chain is 3-isopropylmalate dehydratase large subunit (466 aa).

Positions 347, 407, and 410 each coordinate [4Fe-4S] cluster.

It belongs to the aconitase/IPM isomerase family. LeuC type 1 subfamily. Heterodimer of LeuC and LeuD. It depends on [4Fe-4S] cluster as a cofactor.

The catalysed reaction is (2R,3S)-3-isopropylmalate = (2S)-2-isopropylmalate. Its pathway is amino-acid biosynthesis; L-leucine biosynthesis; L-leucine from 3-methyl-2-oxobutanoate: step 2/4. In terms of biological role, catalyzes the isomerization between 2-isopropylmalate and 3-isopropylmalate, via the formation of 2-isopropylmaleate. The sequence is that of 3-isopropylmalate dehydratase large subunit from Escherichia coli (strain 55989 / EAEC).